Reading from the N-terminus, the 200-residue chain is Dual-action ribosomal maturation protein DarP (200 aa).

Disordered regions lie at residues 1-25 (MTRK…DRPS) and 177-200 (TASG…DDEA). Over residues 12–25 (HAAEVDDNGYDRPS) the composition is skewed to basic and acidic residues. The span at 184-200 (GDDEAADEAGDDHDDEA) shows a compositional bias: acidic residues.

Belongs to the DarP family.

The protein localises to the cytoplasm. In terms of biological role, member of a network of 50S ribosomal subunit biogenesis factors which assembles along the 30S-50S interface, preventing incorrect 23S rRNA structures from forming. Promotes peptidyl transferase center (PTC) maturation. This is Dual-action ribosomal maturation protein DarP from Burkholderia ambifaria (strain MC40-6).